The following is a 540-amino-acid chain: Phosphoenolpyruvate carboxykinase (ATP) (540 aa).

A substrate-binding site is contributed by Arg-65. Lys-87 carries the post-translational modification N6-acetyllysine. Residues Tyr-207 and Lys-213 each contribute to the substrate site. Residues Lys-213, His-232, and 248–256 (GLSGTGKTT) each bind ATP. Mn(2+)-binding residues include Lys-213 and His-232. Asp-269 contacts Mn(2+). Residues Glu-297, Arg-333, 449 to 450 (RI), and Thr-455 contribute to the ATP site. Arg-333 is a substrate binding site. At Lys-523 the chain carries N6-acetyllysine.

The protein belongs to the phosphoenolpyruvate carboxykinase (ATP) family. Monomer. It depends on Mn(2+) as a cofactor.

Its subcellular location is the cytoplasm. The catalysed reaction is oxaloacetate + ATP = phosphoenolpyruvate + ADP + CO2. It functions in the pathway carbohydrate biosynthesis; gluconeogenesis. Its function is as follows. Involved in the gluconeogenesis. Catalyzes the conversion of oxaloacetate (OAA) to phosphoenolpyruvate (PEP) through direct phosphoryl transfer between the nucleoside triphosphate and OAA. This is Phosphoenolpyruvate carboxykinase (ATP) from Escherichia coli O127:H6 (strain E2348/69 / EPEC).